We begin with the raw amino-acid sequence, 401 residues long: Imidazolonepropionase (401 aa).

Fe(3+)-binding residues include His-66 and His-68. Zn(2+)-binding residues include His-66 and His-68. Residues Arg-75, Tyr-138, and His-171 each contribute to the 4-imidazolone-5-propanoate site. Position 138 (Tyr-138) interacts with N-formimidoyl-L-glutamate. His-236 serves as a coordination point for Fe(3+). His-236 lines the Zn(2+) pocket. A 4-imidazolone-5-propanoate-binding site is contributed by Gln-239. Fe(3+) is bound at residue Asp-311. Asp-311 contacts Zn(2+). N-formimidoyl-L-glutamate-binding residues include Asn-313 and Gly-315. Thr-316 serves as a coordination point for 4-imidazolone-5-propanoate.

This sequence belongs to the metallo-dependent hydrolases superfamily. HutI family. It depends on Zn(2+) as a cofactor. The cofactor is Fe(3+).

Its subcellular location is the cytoplasm. The catalysed reaction is 4-imidazolone-5-propanoate + H2O = N-formimidoyl-L-glutamate. It functions in the pathway amino-acid degradation; L-histidine degradation into L-glutamate; N-formimidoyl-L-glutamate from L-histidine: step 3/3. Its function is as follows. Catalyzes the hydrolytic cleavage of the carbon-nitrogen bond in imidazolone-5-propanoate to yield N-formimidoyl-L-glutamate. It is the third step in the universal histidine degradation pathway. In Pseudomonas putida (Arthrobacter siderocapsulatus), this protein is Imidazolonepropionase.